The following is a 787-amino-acid chain: Protocadherin beta-15 (787 aa).

The signal sequence occupies residues 1–26; the sequence is MEPAGERFPEQRQVLILLLLLEVTLA. The Extracellular portion of the chain corresponds to 27 to 690; that stretch reads GWEPRRYSVM…AQADSLTVYL (664 aa). 5 consecutive Cadherin domains span residues 35-133, 138-242, 247-347, 352-451, and 456-561; these read VMEE…SPEF, ITLK…APEF, YEVQ…FPEL, LTSP…APAF, and YTLF…SPFV. N-linked (GlcNAc...) asparagine glycans are attached at residues asparagine 418 and asparagine 436. The N-linked (GlcNAc...) asparagine glycan is linked to asparagine 567. Residues 568-671 form the Cadherin 6 domain; it reads GSAPCTELVP…LVDGFSQPYL (104 aa). A helical membrane pass occupies residues 691–711; it reads VVALASVSSLFLFSVLLFVAV. The Cytoplasmic portion of the chain corresponds to 712 to 787; sequence RLCRRSRAAS…DSRRKSEFLE (76 aa).

The protein resides in the cell membrane. Functionally, potential calcium-dependent cell-adhesion protein. May be involved in the establishment and maintenance of specific neuronal connections in the brain. The protein is Protocadherin beta-15 (PCDHB15) of Pan troglodytes (Chimpanzee).